The chain runs to 125 residues: Large ribosomal subunit protein bL12 (125 aa).

The protein belongs to the bacterial ribosomal protein bL12 family. In terms of assembly, homodimer. Part of the ribosomal stalk of the 50S ribosomal subunit. Forms a multimeric L10(L12)X complex, where L10 forms an elongated spine to which 2 to 4 L12 dimers bind in a sequential fashion. Binds GTP-bound translation factors.

In terms of biological role, forms part of the ribosomal stalk which helps the ribosome interact with GTP-bound translation factors. Is thus essential for accurate translation. The sequence is that of Large ribosomal subunit protein bL12 from Dictyoglomus thermophilum (strain ATCC 35947 / DSM 3960 / H-6-12).